The sequence spans 299 residues: Foldase protein PrsA (299 aa).

A signal peptide spans 1–19 (MKKWTIAASLSIGVLALSA). The N-palmitoyl cysteine moiety is linked to residue C20. The S-diacylglycerol cysteine moiety is linked to residue C20. The PpiC domain occupies 137–227 (NTEIQAQHIL…HGTHIIKVND (91 aa)).

The protein belongs to the PrsA family.

Its subcellular location is the cell membrane. It catalyses the reaction [protein]-peptidylproline (omega=180) = [protein]-peptidylproline (omega=0). Functionally, plays a major role in protein secretion by helping the post-translocational extracellular folding of several secreted proteins. The sequence is that of Foldase protein PrsA from Oceanobacillus iheyensis (strain DSM 14371 / CIP 107618 / JCM 11309 / KCTC 3954 / HTE831).